The chain runs to 185 residues: Translocon-associated protein subunit gamma (185 aa).

Met-1 bears the N-acetylmethionine mark. Topologically, residues 1–27 are lumenal; sequence MAPKGSSKQQSEEDLLLQDFSRNLSAK. 2 positions are modified to phosphoserine: Ser-7 and Ser-11. A helical transmembrane segment spans residues 28–48; the sequence is SSALFFGNAFIVSAIPIWLYW. Residues 49–54 are Cytoplasmic-facing; it reads RIWHMD. The chain crosses the membrane as a helical span at residues 55 to 76; sequence LIQSAVLYSVMTLVSTYLVAFA. Topologically, residues 77–135 are lumenal; it reads YKNVKFVLKHKVAQKREDAVSKEVTRKLSEADNRKMSRKEKDERILWKKNEVADYEATT. At Ser-105 the chain carries Phosphoserine. The helical transmembrane segment at 136-157 threads the bilayer; that stretch reads FSIFYNNTLFLVVVIVASFFIL. Residues 158 to 163 lie on the Cytoplasmic side of the membrane; the sequence is KNFNPT. Residues 164 to 184 form a helical membrane-spanning segment; the sequence is VNYILSISASSGLIALLSTGS.

The protein belongs to the TRAP-gamma family. Heterotetramer of TRAP-alpha, TRAP-beta, TRAP-delta and TRAP-gamma.

Its subcellular location is the endoplasmic reticulum membrane. Its function is as follows. TRAP proteins are part of a complex whose function is to bind calcium to the ER membrane and thereby regulate the retention of ER resident proteins. This chain is Translocon-associated protein subunit gamma (SSR3), found in Homo sapiens (Human).